A 360-amino-acid chain; its full sequence is Peptide chain release factor 1 (360 aa).

Q235 is subject to N5-methylglutamine. A disordered region spans residues 286-311 (QAQAQADTRRNLLGSGDRSDKIRTYN).

The protein belongs to the prokaryotic/mitochondrial release factor family. Post-translationally, methylated by PrmC. Methylation increases the termination efficiency of RF1.

It is found in the cytoplasm. Its function is as follows. Peptide chain release factor 1 directs the termination of translation in response to the peptide chain termination codons UAG and UAA. This Histophilus somni (strain 2336) (Haemophilus somnus) protein is Peptide chain release factor 1.